Here is a 447-residue protein sequence, read N- to C-terminus: Glycogen synthase (447 aa).

An ADP-alpha-D-glucose-binding site is contributed by R15.

Belongs to the glycosyltransferase 1 family. Bacterial/plant glycogen synthase subfamily.

The catalysed reaction is [(1-&gt;4)-alpha-D-glucosyl](n) + ADP-alpha-D-glucose = [(1-&gt;4)-alpha-D-glucosyl](n+1) + ADP + H(+). Its pathway is glycan biosynthesis; glycogen biosynthesis. Functionally, synthesizes alpha-1,4-glucan chains using ADP-glucose. This chain is Glycogen synthase, found in Deinococcus geothermalis (strain DSM 11300 / CIP 105573 / AG-3a).